The chain runs to 137 residues: Holo-[acyl-carrier-protein] synthase (137 aa).

Mg(2+) contacts are provided by Asp7 and Glu58.

This sequence belongs to the P-Pant transferase superfamily. AcpS family. Mg(2+) serves as cofactor.

It is found in the cytoplasm. The catalysed reaction is apo-[ACP] + CoA = holo-[ACP] + adenosine 3',5'-bisphosphate + H(+). Its function is as follows. Transfers the 4'-phosphopantetheine moiety from coenzyme A to a Ser of acyl-carrier-protein. This chain is Holo-[acyl-carrier-protein] synthase, found in Chloroflexus aurantiacus (strain ATCC 29366 / DSM 635 / J-10-fl).